Here is a 366-residue protein sequence, read N- to C-terminus: MDKMFKRTVIGAAVALASTGLMAKEVGVNSDFNVDVYGVAAMSVVNYNTTDNRDDSSGYVLENESRIGFRAHKEMFENFTVTMQIESGYVDSTDWGHGGVSGGVLGFRDTYIGASGDWGNVRVGRVLTPLYEIVDWPFSNPGLGAAFDWGGINAHYDRQSNQIRYDSPKFGGFSFAASVGRDDNDNGGGAATRDANFFGANARYSFEKITLLGAVESGTRVVAETGGDWELDNTGTAVQNPVVAGYDDDTFAYLVGFEASLPAGFGLAAAFKGEELDNGIRKHKQDSFSIVGQYWNGPLGIKIGYAANLDSKIDGVKQDDANNILSGQVMGVINGFVPYVRVAARSDFTSDKDTDIVTRVGLEYGF.

Residues methionine 1–alanine 23 form the signal peptide.

This sequence belongs to the Gram-negative porin family.

It localises to the cell outer membrane. Involved in the uptake of chitosugars. The sequence is that of Chitoporin (chiP) from Vibrio furnissii.